Here is a 273-residue protein sequence, read N- to C-terminus: Large ribosomal subunit protein uL2 (273 aa).

The segment at 228–273 (VDHPHGGGEGKTSGGRHPVTPWGFPTKGKKTRKNKRTSKFIVKKRK) is disordered. The segment covering 254 to 273 (KGKKTRKNKRTSKFIVKKRK) has biased composition (basic residues).

Belongs to the universal ribosomal protein uL2 family. In terms of assembly, part of the 50S ribosomal subunit. Forms a bridge to the 30S subunit in the 70S ribosome.

In terms of biological role, one of the primary rRNA binding proteins. Required for association of the 30S and 50S subunits to form the 70S ribosome, for tRNA binding and peptide bond formation. It has been suggested to have peptidyltransferase activity; this is somewhat controversial. Makes several contacts with the 16S rRNA in the 70S ribosome. The polypeptide is Large ribosomal subunit protein uL2 (Rickettsia rickettsii (strain Iowa)).